The chain runs to 158 residues: Transcription factor bHLH146 (158 aa).

Over residues 77 to 90 (SSSSNPTTTTSSSS) the composition is skewed to low complexity. Residues 77 to 110 (SSSSNPTTTTSSSSDGIRILERPDKEGGNEEGGI) form a disordered region. Residues 94–110 (RILERPDKEGGNEEGGI) show a composition bias toward basic and acidic residues. Residues 94–143 (RILERPDKEGGNEEGGIEERLRELKKLLPGGEEMNVEEMLSEIGNYIKCL) enclose the bHLH; atypical domain.

This sequence belongs to the bHLH protein family.

The protein resides in the nucleus. This chain is Transcription factor bHLH146 (BHLH146), found in Arabidopsis thaliana (Mouse-ear cress).